A 135-amino-acid chain; its full sequence is UPF0102 protein Mkms_2031 (135 aa).

The protein belongs to the UPF0102 family.

The sequence is that of UPF0102 protein Mkms_2031 from Mycobacterium sp. (strain KMS).